The sequence spans 976 residues: 3-O-beta-L-arabinopyranosyl-alpha-L-arabinofuranosidase (976 aa).

An N-terminal signal peptide occupies residues 1–28 (MSHRNKALVAIVAGTALLISSGAAIGQA). Glu190 serves as the catalytic Proton donor. The Nucleophile role is filled by Glu315. Residues 519–654 (LLVEEVENTV…DNTLDKFLLY (136 aa)) form the CBM6 domain.

Belongs to the glycosyl hydrolase 39 family.

The protein localises to the secreted. It catalyses the reaction Hydrolysis of beta-L-Arap-(1-&gt;3)-L-Araf disaccharides from non-reducing terminals in branches of type II arabinogalactan attached to proteins.. Functionally, hydrolase involved in the degradation of the gum arabic arabinogalactan protein (AGP) and larch AGP. Catalyzes the release of 3-O-beta-L-arabinopyranosyl-L-arabinose (beta-L-Arap-(1-&gt;3)-L-Ara) from gum arabic AGP and larch AGP. Also cleaves a small amount of beta-L-Arap-(1-&gt;3)-L-Ara from sugar beet arabinan, but wheat AGP cannot be used as a substrate. Can also release 3-O-alpha-D-galactopyranosyl-L-arabinose (alpha-D-Galp-(1-&gt;3)-L-Ara) from gum arabic AGP, with low efficiency. The protein is 3-O-beta-L-arabinopyranosyl-alpha-L-arabinofuranosidase of Bifidobacterium pseudocatenulatum.